The sequence spans 452 residues: tRNA modification GTPase MnmE (452 aa).

Residues R21, E78, and K118 each contribute to the (6S)-5-formyl-5,6,7,8-tetrahydrofolate site. The TrmE-type G domain occupies G214 to G375. N224 contacts K(+). GTP-binding positions include N224 to S229, T243 to T249, and D268 to G271. S228 is a Mg(2+) binding site. K(+) is bound by residues T243, I245, and T248. T249 is a binding site for Mg(2+). K452 is a binding site for (6S)-5-formyl-5,6,7,8-tetrahydrofolate.

It belongs to the TRAFAC class TrmE-Era-EngA-EngB-Septin-like GTPase superfamily. TrmE GTPase family. As to quaternary structure, homodimer. Heterotetramer of two MnmE and two MnmG subunits. K(+) is required as a cofactor.

It is found in the cytoplasm. In terms of biological role, exhibits a very high intrinsic GTPase hydrolysis rate. Involved in the addition of a carboxymethylaminomethyl (cmnm) group at the wobble position (U34) of certain tRNAs, forming tRNA-cmnm(5)s(2)U34. The sequence is that of tRNA modification GTPase MnmE from Haemophilus influenzae (strain PittEE).